The chain runs to 155 residues: Large ribosomal subunit protein uL13 (155 aa).

Belongs to the universal ribosomal protein uL13 family. In terms of assembly, part of the 50S ribosomal subunit.

In terms of biological role, this protein is one of the early assembly proteins of the 50S ribosomal subunit, although it is not seen to bind rRNA by itself. It is important during the early stages of 50S assembly. This Rickettsia bellii (strain OSU 85-389) protein is Large ribosomal subunit protein uL13.